A 363-amino-acid chain; its full sequence is 3-isopropylmalate dehydrogenase (363 aa).

Residue 78 to 91 (GPKWEHLPPAEQPE) participates in NAD(+) binding. Residues Arg-99, Arg-109, Arg-138, and Asp-227 each contribute to the substrate site. The Mg(2+) site is built by Asp-227, Asp-251, and Asp-255. Residue 285–297 (GSAPDIAGKNIAN) coordinates NAD(+).

This sequence belongs to the isocitrate and isopropylmalate dehydrogenases family. LeuB type 1 subfamily. As to quaternary structure, homodimer. Mg(2+) is required as a cofactor. The cofactor is Mn(2+).

It localises to the cytoplasm. It catalyses the reaction (2R,3S)-3-isopropylmalate + NAD(+) = 4-methyl-2-oxopentanoate + CO2 + NADH. Its pathway is amino-acid biosynthesis; L-leucine biosynthesis; L-leucine from 3-methyl-2-oxobutanoate: step 3/4. In terms of biological role, catalyzes the oxidation of 3-carboxy-2-hydroxy-4-methylpentanoate (3-isopropylmalate) to 3-carboxy-4-methyl-2-oxopentanoate. The product decarboxylates to 4-methyl-2 oxopentanoate. The sequence is that of 3-isopropylmalate dehydrogenase from Yersinia pestis.